Here is an 841-residue protein sequence, read N- to C-terminus: Translation initiation factor IF-2 (841 aa).

Basic and acidic residues-rich tracts occupy residues 1 to 12 (MSDNEIKNEAPK), 52 to 92 (ALKA…EATK), 114 to 170 (EQPK…REEA), 188 to 202 (READRDNDRRSEANR), and 213 to 235 (KKGDREDKNERNADRRNQKDVKG). Disordered stretches follow at residues 1 to 24 (MSDNEIKNEAPKKLSLQRRTKTTV) and 52 to 246 (ALKA…GSAL). The tr-type G domain occupies 340–510 (TRAPVVTIMG…LLQSEVLELT (171 aa)). The tract at residues 349-356 (GHVDHGKT) is G1. Residue 349–356 (GHVDHGKT) participates in GTP binding. The tract at residues 374-378 (GITQH) is G2. The segment at 396–399 (DTPG) is G3. Residues 396 to 400 (DTPGH) and 450 to 453 (NKID) each bind GTP. Residues 450-453 (NKID) are G4. The segment at 486-488 (SAK) is G5.

Belongs to the TRAFAC class translation factor GTPase superfamily. Classic translation factor GTPase family. IF-2 subfamily.

The protein resides in the cytoplasm. Functionally, one of the essential components for the initiation of protein synthesis. Protects formylmethionyl-tRNA from spontaneous hydrolysis and promotes its binding to the 30S ribosomal subunits. Also involved in the hydrolysis of GTP during the formation of the 70S ribosomal complex. The sequence is that of Translation initiation factor IF-2 from Actinobacillus pleuropneumoniae serotype 5b (strain L20).